The primary structure comprises 345 residues: uncharacterized protein (345 aa).

It is found in the cell membrane. In terms of biological role, involved in potassium and divalent cation transport. Enhances the transport activity of the cation/potassium transporter CzcD. This is an uncharacterized protein from Bacillus velezensis (strain DSM 23117 / BGSC 10A6 / LMG 26770 / FZB42) (Bacillus amyloliquefaciens subsp. plantarum).